Here is a 463-residue protein sequence, read N- to C-terminus: Ammonium transporter 1 (463 aa).

The Extracellular portion of the chain corresponds to Met-1–Asn-39. The chain crosses the membrane as a helical span at residues Thr-40–Phe-60. The Cytoplasmic segment spans residues Glu-61–Gln-76. Residues Ile-77 to Phe-97 traverse the membrane as a helical segment. The Extracellular portion of the chain corresponds to Gly-98–Asn-127. A helical membrane pass occupies residues Ile-128–Met-148. Residues Thr-149 to Ala-160 lie on the Cytoplasmic side of the membrane. A helical membrane pass occupies residues Phe-161–Trp-181. Residues Gly-182–Asp-194 are Extracellular-facing. A helical transmembrane segment spans residues Phe-195–Tyr-215. Over Val-216 to Asn-233 the chain is Cytoplasmic. Residues Leu-234–Gly-254 form a helical membrane-spanning segment. At Ser-255–Ser-265 the chain is on the extracellular side. A helical membrane pass occupies residues Ala-266 to Ala-286. Over Ala-287 to Thr-293 the chain is Cytoplasmic. Residues Val-294–Ile-314 traverse the membrane as a helical segment. Topologically, residues Asn-315 to Ser-316 are extracellular. The chain crosses the membrane as a helical span at residues Gln-317 to Leu-337. Topologically, residues Lys-338–Ser-351 are cytoplasmic. A helical transmembrane segment spans residues Val-352 to Val-372. The Extracellular portion of the chain corresponds to Asn-373–Leu-392. A helical membrane pass occupies residues Leu-393–Ile-413. The Cytoplasmic portion of the chain corresponds to Asp-414–Lys-463.

Belongs to the ammonia transporter channel (TC 1.A.11.2) family.

Its subcellular location is the cell membrane. The protein localises to the endosome membrane. It localises to the lysosome membrane. It is found in the cytoplasmic vesicle. The protein resides in the phagosome membrane. In terms of biological role, ammonium transporter that mediates the excretion of ammonium. Controls ammonium homeostasis during growth and development. Ammonium has been shown to function as a morphogen at multiple steps during the development. In Dictyostelium discoideum (Social amoeba), this protein is Ammonium transporter 1 (amtA).